Reading from the N-terminus, the 263-residue chain is Putative TATA-binding protein pB263R (263 aa).

It belongs to the asfivirus B263R family.

Putative TATA-binding protein. This African swine fever virus (isolate Warthog/Namibia/Wart80/1980) (ASFV) protein is Putative TATA-binding protein pB263R.